Reading from the N-terminus, the 661-residue chain is WD repeat-containing protein 26 (661 aa).

Residues 1–27 (MQANGAGGGGGGGGGGGGGGGGGGGQG) show a composition bias toward gly residues. 2 disordered regions span residues 1-70 (MQAN…ASNN) and 99-118 (TAAS…KKKK). Low complexity-rich tracts occupy residues 56-70 (ANGL…ASNN) and 99-113 (TAAS…LGSS). 2 positions are modified to phosphoserine: Ser121 and Ser123. The LisH domain occupies 123–155 (SDEDVIRLIGQHLNGLGLNQTVDLLMQESGCRL). Residues 156-231 (EHPSATKFRN…EYLEDGKVLE (76 aa)) form the CTLH domain. 6 WD repeats span residues 353-392 (EHCN…HLLK), 399-438 (GHAY…GELR), 444-484 (SHED…DSWE), 524-563 (QEDH…LVRK), 566-608 (GVTQ…PIAE), and 611-651 (GHTR…DHQN).

Forms homooligomers. Identified in the CTLH complex that contains GID4, RANBP9 and/or RANBP10, MKLN1, MAEA, RMND5A (or alternatively its paralog RMND5B), GID8, ARMC8, WDR26 and YPEL5. Within this complex, MAEA, RMND5A (or alternatively its paralog RMND5B), GID8, WDR26, and RANBP9 and/or RANBP10 form the catalytic core, while GID4, MKLN1, ARMC8 and YPEL5 have ancillary roles. Interacts with DDB1-CUL4A/B E3 ligase complexes. Forms a complex composed of at least WDR26, a G-beta:gamma unit, and PLCB2. Interacts with AXIN1. In terms of tissue distribution, broadly expressed, with highest levels in heart and skeletal muscle.

The protein resides in the cytoplasm. It is found in the nucleus. The protein localises to the mitochondrion. In terms of biological role, G-beta-like protein involved in cell signal transduction. Acts as a negative regulator in MAPK signaling pathway. Functions as a scaffolding protein to promote G beta:gamma-mediated PLCB2 plasma membrane translocation and subsequent activation in leukocytes. Core component of the CTLH E3 ubiquitin-protein ligase complex that selectively accepts ubiquitin from UBE2H and mediates ubiquitination and subsequent proteasomal degradation of the transcription factor HBP1. Acts as a negative regulator of the canonical Wnt signaling pathway through preventing ubiquitination of beta-catenin CTNNB1 by the beta-catenin destruction complex, thus negatively regulating CTNNB1 degradation. Serves as a scaffold to coordinate PI3K/AKT pathway-driven cell growth and migration. Protects cells from oxidative stress-induced apoptosis via the down-regulation of AP-1 transcriptional activity as well as by inhibiting cytochrome c release from mitochondria. Also protects cells by promoting hypoxia-mediated autophagy and mitophagy. This chain is WD repeat-containing protein 26 (WDR26), found in Homo sapiens (Human).